The sequence spans 130 residues: Small ribosomal subunit protein uS8 (130 aa).

Belongs to the universal ribosomal protein uS8 family. In terms of assembly, part of the 30S ribosomal subunit.

Functionally, one of the primary rRNA binding proteins, it binds directly to 16S rRNA central domain where it helps coordinate assembly of the platform of the 30S subunit. The sequence is that of Small ribosomal subunit protein uS8 from Methanotorris igneus (Methanococcus igneus).